The chain runs to 325 residues: Tetraacyldisaccharide 4'-kinase (325 aa).

55-62 (TAGGNGKT) is an ATP binding site.

It belongs to the LpxK family.

The enzyme catalyses a lipid A disaccharide + ATP = a lipid IVA + ADP + H(+). It functions in the pathway glycolipid biosynthesis; lipid IV(A) biosynthesis; lipid IV(A) from (3R)-3-hydroxytetradecanoyl-[acyl-carrier-protein] and UDP-N-acetyl-alpha-D-glucosamine: step 6/6. In terms of biological role, transfers the gamma-phosphate of ATP to the 4'-position of a tetraacyldisaccharide 1-phosphate intermediate (termed DS-1-P) to form tetraacyldisaccharide 1,4'-bis-phosphate (lipid IVA). This chain is Tetraacyldisaccharide 4'-kinase, found in Salmonella newport (strain SL254).